The sequence spans 554 residues: Glucose-6-phosphate isomerase (554 aa).

Glutamate 359 functions as the Proton donor in the catalytic mechanism. Residues histidine 390 and lysine 518 contribute to the active site.

Belongs to the GPI family.

It is found in the cytoplasm. It catalyses the reaction alpha-D-glucose 6-phosphate = beta-D-fructose 6-phosphate. It participates in carbohydrate biosynthesis; gluconeogenesis. Its pathway is carbohydrate degradation; glycolysis; D-glyceraldehyde 3-phosphate and glycerone phosphate from D-glucose: step 2/4. Its function is as follows. Catalyzes the reversible isomerization of glucose-6-phosphate to fructose-6-phosphate. The sequence is that of Glucose-6-phosphate isomerase from Ectopseudomonas mendocina (strain ymp) (Pseudomonas mendocina).